The sequence spans 339 residues: MIDQKIFETTLNIDDPTNFCTNVEAHLLKELENIYVGKCFKNSFILNITGIIQRSPCFIMRTNNSGRGYMHVRFSALVSYLNAFDLIAAVKIIKNDSNIILGESLLTEPVTIVIPSSESQNNVAEVGQIVPVQLANSSVYYIPGRQQASATGSIFIPKHTFSVYHVQEELTQEQALNLTKLVNIIEMLLESRSKKDFKQICFFEKLYYTYSISSDEILDLKIWKGPKGKEMSRLKPCNVLSFLYDALKNKSSSLGFWARPPNLLKSSPLAYQQDQNSFNATELPIICSAEVMFVTLLKEIINYLQFMNDLCDTFNNEQLIKRHENIWMLIEQRKIGHDF.

This sequence belongs to the Asfivirus DNA-directed RNA polymerase RPB7 homolog family. Part of the viral DNA-directed RNA polymerase that consists of 8 polII-like subunits (RPB1, RPB2, RPB3, RPB5, RPB6, RPB7, RPB9, RPB10), a capping enzyme and a termination factor.

It localises to the host cytoplasm. It is found in the virion. Its function is as follows. Component of the DNA-directed RNA polymerase (RNAP) that catalyzes the transcription in the cytoplasm of viral DNA into RNA using the four ribonucleoside triphosphates as substrates. The protein is DNA-directed RNA polymerase RPB7 homolog of Ornithodoros (relapsing fever ticks).